The primary structure comprises 384 residues: Sensor-like histidine kinase SenX3 (384 aa).

Residues 153 to 369 (NVSHELKTPV…TFTLSIPEYP (217 aa)) enclose the Histidine kinase domain. Phosphohistidine; by autocatalysis is present on His-156. The segment at 360–384 (TFTLSIPEYPDPESHSDEREDQRER) is disordered. Over residues 371–384 (PESHSDEREDQRER) the composition is skewed to basic and acidic residues.

In terms of processing, autophosphorylated.

The protein resides in the cell membrane. It carries out the reaction ATP + protein L-histidine = ADP + protein N-phospho-L-histidine.. Functionally, member of the two-component regulatory system SenX3/RegX3 involved in stress response. The system is involved in phosphate starvation response. Probably exhibits a dual role as a phosphatase or a phosphodonor for the response regulator RegX3, depending upon phosphate availability. When environmental phosphate is abundant, SenX3 is required to maintain RegX3 in an unphosphorylated state, where it is unable to bind target DNA. Under conditions of phosphate limitation, SenX3 autophosphorylates and then transfers the phosphate group to RegX3. Probably does not itself sense phosphate concentrations, which may be relayed to SenX3 by the PstSCAB phosphate transporter system. This is Sensor-like histidine kinase SenX3 from Mycolicibacterium smegmatis (strain ATCC 700084 / mc(2)155) (Mycobacterium smegmatis).